The primary structure comprises 366 residues: GTPase Obg (366 aa).

In terms of domain architecture, Obg spans 1-159 (MKFLDEAKVY…KTIWLRLKLI (159 aa)). The 168-residue stretch at 160-327 (ADAGLVGLPN…VLRALRDVIV (168 aa)) folds into the OBG-type G domain. Residues 166–173 (GLPNAGKS), 191–195 (FTTLH), 212–215 (DIPG), 279–282 (SQID), and 308–310 (SAI) each bind GTP. S173 and T193 together coordinate Mg(2+). A disordered region spans residues 333–366 (DDETISQRPKKHRHKLEDRPQHENGPEESEEGEE). Over residues 347-357 (KLEDRPQHENG) the composition is skewed to basic and acidic residues.

This sequence belongs to the TRAFAC class OBG-HflX-like GTPase superfamily. OBG GTPase family. Monomer. Requires Mg(2+) as cofactor.

Its subcellular location is the cytoplasm. An essential GTPase which binds GTP, GDP and possibly (p)ppGpp with moderate affinity, with high nucleotide exchange rates and a fairly low GTP hydrolysis rate. Plays a role in control of the cell cycle, stress response, ribosome biogenesis and in those bacteria that undergo differentiation, in morphogenesis control. The sequence is that of GTPase Obg from Allorhizobium ampelinum (strain ATCC BAA-846 / DSM 112012 / S4) (Agrobacterium vitis (strain S4)).